Consider the following 140-residue polypeptide: Sex-regulated protein janus-B (140 aa).

Residue Arg42 participates in substrate binding. The active-site Proton acceptor is the His69. Position 110–112 (110–112 (SRT)) interacts with substrate.

The protein belongs to the janus family.

Its function is as follows. JanA and janB regulate somatic sex differentiation. The polypeptide is Sex-regulated protein janus-B (janB) (Drosophila teissieri (Fruit fly)).